The sequence spans 520 residues: GMP synthase [glutamine-hydrolyzing] (520 aa).

One can recognise a Glutamine amidotransferase type-1 domain in the interval 12 to 205 (KIIVLDYGSQ…AISICGARGD (194 aa)). The active-site Nucleophile is the Cys89. Residues His179 and Glu181 contribute to the active site. Residues 206–395 (WSMDNFIDME…LGMPDEVVWR (190 aa)) form the GMPS ATP-PPase domain. 233 to 239 (SGGVDSS) lines the ATP pocket.

Homodimer.

It carries out the reaction XMP + L-glutamine + ATP + H2O = GMP + L-glutamate + AMP + diphosphate + 2 H(+). The protein operates within purine metabolism; GMP biosynthesis; GMP from XMP (L-Gln route): step 1/1. Its function is as follows. Catalyzes the synthesis of GMP from XMP. The chain is GMP synthase [glutamine-hydrolyzing] from Streptococcus equi subsp. zooepidemicus (strain H70).